The primary structure comprises 141 residues: ATP synthase epsilon chain (141 aa).

This sequence belongs to the ATPase epsilon chain family. F-type ATPases have 2 components, CF(1) - the catalytic core - and CF(0) - the membrane proton channel. CF(1) has five subunits: alpha(3), beta(3), gamma(1), delta(1), epsilon(1). CF(0) has three main subunits: a, b and c.

It is found in the cell inner membrane. Functionally, produces ATP from ADP in the presence of a proton gradient across the membrane. In Hahella chejuensis (strain KCTC 2396), this protein is ATP synthase epsilon chain.